The primary structure comprises 170 residues: N-alpha-acetyltransferase 50 (170 aa).

The N-acetyltransferase domain maps to I6 to K155. Y31 is a substrate binding site. Y73 is an active-site residue. A substrate-binding site is contributed by M75. An acetyl-CoA-binding site is contributed by L77–T90. C79–T90 is a CoA binding site. H112 is a catalytic residue. Residue N117–K126 coordinates CoA. The interval Y138–R141 is substrate.

This sequence belongs to the acetyltransferase family. GNAT subfamily.

Its subcellular location is the cytoplasm. The protein resides in the nucleus. It catalyses the reaction N-terminal L-methionyl-L-alanyl-[protein] + acetyl-CoA = N-terminal N(alpha)-acetyl-L-methionyl-L-alanyl-[protein] + CoA + H(+). The catalysed reaction is N-terminal L-methionyl-L-seryl-[protein] + acetyl-CoA = N-terminal N(alpha)-acetyl-L-methionyl-L-seryl-[protein] + CoA + H(+). It carries out the reaction N-terminal L-methionyl-L-valyl-[protein] + acetyl-CoA = N-terminal N(alpha)-acetyl-L-methionyl-L-valyl-[protein] + CoA + H(+). The enzyme catalyses N-terminal L-methionyl-L-threonyl-[protein] + acetyl-CoA = N-terminal N(alpha)-acetyl-L-methionyl-L-threonyl-[protein] + CoA + H(+). It catalyses the reaction N-terminal L-methionyl-L-lysyl-[protein] + acetyl-CoA = N-terminal N(alpha)-acetyl-L-methionyl-L-lysyl-[protein] + CoA + H(+). The catalysed reaction is N-terminal L-methionyl-L-leucyl-[protein] + acetyl-CoA = N-terminal N(alpha)-acetyl-L-methionyl-L-leucyl-[protein] + CoA + H(+). It carries out the reaction N-terminal L-methionyl-L-phenylalanyl-[protein] + acetyl-CoA = N-terminal N(alpha)-acetyl-L-methionyl-L-phenylalanyl-[protein] + CoA + H(+). The enzyme catalyses N-terminal L-methionyl-L-tyrosyl-[protein] + acetyl-CoA = N-terminal N(alpha)-acetyl-L-methionyl-L-tyrosyl-[protein] + CoA + H(+). Functionally, N-alpha-acetyltransferase that acetylates the N-terminus of proteins that retain their initiating methionine. Has a broad substrate specificity: able to acetylate the initiator methionine of most peptides, except for those with a proline in second position. Also displays N-epsilon-acetyltransferase activity by mediating acetylation of the side chain of specific lysines on proteins. The relevance of N-epsilon-acetyltransferase activity is however unclear. Required for sister chromatid cohesion during mitosis by promoting binding of CDCA5/sororin to cohesin. This chain is N-alpha-acetyltransferase 50 (naa50), found in Xenopus laevis (African clawed frog).